We begin with the raw amino-acid sequence, 81 residues long: ATP synthase subunit c, chloroplastic (81 aa).

2 helical membrane passes run 3-23 and 53-73; these read PLISAASVIAAGLAVGLASIG and LLLSLAFMEALTIYGLVVALA.

This sequence belongs to the ATPase C chain family. As to quaternary structure, F-type ATPases have 2 components, F(1) - the catalytic core - and F(0) - the membrane proton channel. F(1) has five subunits: alpha(3), beta(3), gamma(1), delta(1), epsilon(1). F(0) has four main subunits: a(1), b(1), b'(1) and c(10-14). The alpha and beta chains form an alternating ring which encloses part of the gamma chain. F(1) is attached to F(0) by a central stalk formed by the gamma and epsilon chains, while a peripheral stalk is formed by the delta, b and b' chains.

The protein localises to the plastid. The protein resides in the chloroplast thylakoid membrane. Functionally, f(1)F(0) ATP synthase produces ATP from ADP in the presence of a proton or sodium gradient. F-type ATPases consist of two structural domains, F(1) containing the extramembraneous catalytic core and F(0) containing the membrane proton channel, linked together by a central stalk and a peripheral stalk. During catalysis, ATP synthesis in the catalytic domain of F(1) is coupled via a rotary mechanism of the central stalk subunits to proton translocation. Key component of the F(0) channel; it plays a direct role in translocation across the membrane. A homomeric c-ring of between 10-14 subunits forms the central stalk rotor element with the F(1) delta and epsilon subunits. The chain is ATP synthase subunit c, chloroplastic from Angiopteris evecta (Mule's foot fern).